Reading from the N-terminus, the 290-residue chain is UPF0761 membrane protein YihY (290 aa).

The next 6 helical transmembrane spans lie at 44-64 (LLSLVPLVAVVFALFAAFPMF), 104-124 (VGACGLIVTALLLMYSIDSAL), 140-160 (FAVYWMILTLGPLLAGASLAI), 183-203 (IFPLLLSWISFWLLYSIVPTI), 210-230 (AIVGAFVAALLFEAGKKGFAL), and 244-264 (VLAVIPILFVWVYWTWCIVLL).

It belongs to the UPF0761 family.

It is found in the cell inner membrane. The polypeptide is UPF0761 membrane protein YihY (Shigella boydii serotype 4 (strain Sb227)).